A 127-amino-acid chain; its full sequence is Calcium-binding protein PBP1 (127 aa).

The span at Met1–Gln18 shows a compositional bias: polar residues. The interval Met1 to Gln20 is disordered. In terms of domain architecture, EF-hand spans Leu72 to Glu107. Ca(2+) is bound by residues Asp85, Asp87, Asp89, and Glu96.

Interacts with PID.

Potential calcium sensor that binds calcium in vitro. The chain is Calcium-binding protein PBP1 (PBP1) from Arabidopsis thaliana (Mouse-ear cress).